The primary structure comprises 391 residues: GTPase Obg (391 aa).

Positions 1 to 159 constitute an Obg domain; sequence MKFIDEALIR…RDLQLELMLL (159 aa). The OBG-type G domain occupies 160–333; sequence ADVGMLGLPN…LTRDIMDFIE (174 aa). Residues 166–173, 191–195, 213–216, 283–286, and 314–316 contribute to the GTP site; these read GLPNAGKS, FTTLV, DIPG, NKID, and SAA. Positions 173 and 193 each coordinate Mg(2+). The segment at 361–391 is disordered; sequence QNPITEDDWDDLDDDGWTEEDDEGVEFIYKP. Positions 365–385 are enriched in acidic residues; the sequence is TEDDWDDLDDDGWTEEDDEGV.

Belongs to the TRAFAC class OBG-HflX-like GTPase superfamily. OBG GTPase family. In terms of assembly, monomer. Requires Mg(2+) as cofactor.

Its subcellular location is the cytoplasm. Its function is as follows. An essential GTPase which binds GTP, GDP and possibly (p)ppGpp with moderate affinity, with high nucleotide exchange rates and a fairly low GTP hydrolysis rate. Plays a role in control of the cell cycle, stress response, ribosome biogenesis and in those bacteria that undergo differentiation, in morphogenesis control. The polypeptide is GTPase Obg (Glaesserella parasuis serovar 5 (strain SH0165) (Haemophilus parasuis)).